The chain runs to 464 residues: Phospho-2-dehydro-3-deoxyheptonate aldolase AroG (464 aa).

Cys-87 is a binding site for Mn(2+). Phosphoenolpyruvate contacts are provided by residues Arg-126, 285 to 286, Lys-308, and Arg-339; that span reads ER. The Mn(2+) site is built by His-371, Glu-413, and Asp-443.

This sequence belongs to the class-II DAHP synthase family. In terms of assembly, homodimer. Probably interacts with MSMEG_5536. Mn(2+) serves as cofactor. Requires Co(2+) as cofactor. The cofactor is Cd(2+).

The enzyme catalyses D-erythrose 4-phosphate + phosphoenolpyruvate + H2O = 7-phospho-2-dehydro-3-deoxy-D-arabino-heptonate + phosphate. It functions in the pathway metabolic intermediate biosynthesis; chorismate biosynthesis; chorismate from D-erythrose 4-phosphate and phosphoenolpyruvate: step 1/7. In terms of biological role, catalyzes an aldol-like condensation reaction between phosphoenolpyruvate (PEP) and D-erythrose 4-phosphate (E4P) to generate 3-deoxy-D-arabino-heptulosonate 7-phosphate (DAH7P) and inorganic phosphate. The protein is Phospho-2-dehydro-3-deoxyheptonate aldolase AroG (aroG) of Mycolicibacterium smegmatis (strain ATCC 700084 / mc(2)155) (Mycobacterium smegmatis).